A 370-amino-acid polypeptide reads, in one-letter code: 3-dehydroquinate synthase (370 aa).

Residues 112 to 116 (GVIGD), 136 to 137 (TT), lysine 149, lysine 158, and 176 to 179 (TLAT) each bind NAD(+). Residues glutamate 191, histidine 254, and histidine 276 each contribute to the Zn(2+) site.

This sequence belongs to the sugar phosphate cyclases superfamily. Dehydroquinate synthase family. Co(2+) serves as cofactor. It depends on Zn(2+) as a cofactor. NAD(+) is required as a cofactor.

Its subcellular location is the cytoplasm. It carries out the reaction 7-phospho-2-dehydro-3-deoxy-D-arabino-heptonate = 3-dehydroquinate + phosphate. The protein operates within metabolic intermediate biosynthesis; chorismate biosynthesis; chorismate from D-erythrose 4-phosphate and phosphoenolpyruvate: step 2/7. Its function is as follows. Catalyzes the conversion of 3-deoxy-D-arabino-heptulosonate 7-phosphate (DAHP) to dehydroquinate (DHQ). The protein is 3-dehydroquinate synthase of Xylella fastidiosa (strain M23).